Reading from the N-terminus, the 122-residue chain is Ribosome-binding factor A (122 aa).

It belongs to the RbfA family. Monomer. Binds 30S ribosomal subunits, but not 50S ribosomal subunits or 70S ribosomes.

The protein localises to the cytoplasm. Functionally, one of several proteins that assist in the late maturation steps of the functional core of the 30S ribosomal subunit. Associates with free 30S ribosomal subunits (but not with 30S subunits that are part of 70S ribosomes or polysomes). Required for efficient processing of 16S rRNA. May interact with the 5'-terminal helix region of 16S rRNA. The protein is Ribosome-binding factor A of Polynucleobacter necessarius subsp. necessarius (strain STIR1).